The sequence spans 28 residues: Dermaseptin-6TR (28 aa).

As to expression, expressed by the skin glands.

Its subcellular location is the secreted. Functionally, has antimicrobial activity. This is Dermaseptin-6TR from Phyllomedusa trinitatis (Trinidad leaf frog).